The chain runs to 161 residues: ATP synthase subunit b 1 (161 aa).

Residues 5–25 form a helical membrane-spanning segment; sequence AETWVAVAFVLMVALFIYFGA.

Belongs to the ATPase B chain family. In terms of assembly, F-type ATPases have 2 components, F(1) - the catalytic core - and F(0) - the membrane proton channel. F(1) has five subunits: alpha(3), beta(3), gamma(1), delta(1), epsilon(1). F(0) has three main subunits: a(1), b(2) and c(10-14). The alpha and beta chains form an alternating ring which encloses part of the gamma chain. F(1) is attached to F(0) by a central stalk formed by the gamma and epsilon chains, while a peripheral stalk is formed by the delta and b chains.

It is found in the cell inner membrane. Functionally, f(1)F(0) ATP synthase produces ATP from ADP in the presence of a proton or sodium gradient. F-type ATPases consist of two structural domains, F(1) containing the extramembraneous catalytic core and F(0) containing the membrane proton channel, linked together by a central stalk and a peripheral stalk. During catalysis, ATP synthesis in the catalytic domain of F(1) is coupled via a rotary mechanism of the central stalk subunits to proton translocation. Its function is as follows. Component of the F(0) channel, it forms part of the peripheral stalk, linking F(1) to F(0). This Afipia carboxidovorans (strain ATCC 49405 / DSM 1227 / KCTC 32145 / OM5) (Oligotropha carboxidovorans) protein is ATP synthase subunit b 1.